We begin with the raw amino-acid sequence, 167 residues long: NADH-quinone oxidoreductase subunit B 1 (167 aa).

Positions 38, 39, 104, and 133 each coordinate [4Fe-4S] cluster.

This sequence belongs to the complex I 20 kDa subunit family. NDH-1 is composed of 14 different subunits. Subunits NuoB, C, D, E, F, and G constitute the peripheral sector of the complex. The cofactor is [4Fe-4S] cluster.

It localises to the cell membrane. It catalyses the reaction a quinone + NADH + 5 H(+)(in) = a quinol + NAD(+) + 4 H(+)(out). Its function is as follows. NDH-1 shuttles electrons from NADH, via FMN and iron-sulfur (Fe-S) centers, to quinones in the respiratory chain. The immediate electron acceptor for the enzyme in this species is believed to be ubiquinone. Couples the redox reaction to proton translocation (for every two electrons transferred, four hydrogen ions are translocated across the cytoplasmic membrane), and thus conserves the redox energy in a proton gradient. The chain is NADH-quinone oxidoreductase subunit B 1 from Roseiflexus castenholzii (strain DSM 13941 / HLO8).